The chain runs to 777 residues: Beta-hexosaminidase (777 aa).

The N-terminal stretch at 1–18 (MKRLTFGACICCLLSLMA) is a signal peptide. A lipid anchor (N-palmitoyl cysteine) is attached at cysteine 19. Cysteine 19 carries S-diacylglycerol cysteine lipidation. Residues 625 to 766 (APKPGLTIRT…VMIRLKGEEK (142 aa)) form the PA14 domain.

The protein belongs to the glycosyl hydrolase 20 family.

The protein resides in the cell outer membrane. The enzyme catalyses Hydrolysis of terminal non-reducing N-acetyl-D-hexosamine residues in N-acetyl-beta-D-hexosaminides.. This Porphyromonas gingivalis (strain ATCC BAA-308 / W83) protein is Beta-hexosaminidase (nahA).